The primary structure comprises 40 residues: Dihydrolipoyl dehydrogenase (40 aa).

36 to 40 is an FAD binding site; it reads EKRGT.

This sequence belongs to the class-I pyridine nucleotide-disulfide oxidoreductase family. In terms of assembly, homodimer. FAD is required as a cofactor.

It is found in the mitochondrion matrix. It carries out the reaction N(6)-[(R)-dihydrolipoyl]-L-lysyl-[protein] + NAD(+) = N(6)-[(R)-lipoyl]-L-lysyl-[protein] + NADH + H(+). Its function is as follows. Lipoamide dehydrogenase is a component of the glycine cleavage system as well as of the alpha-ketoacid dehydrogenase complexes. The pyruvate dehydrogenase complex contains multiple copies of three enzymatic components: pyruvate dehydrogenase (E1), dihydrolipoamide acetyltransferase (E2) and lipoamide dehydrogenase (E3). The polypeptide is Dihydrolipoyl dehydrogenase (Solanum tuberosum (Potato)).